Reading from the N-terminus, the 116-residue chain is Protein Rev (116 aa).

Position 8 is a phosphoserine; by host CK2 (Ser8). The interval 18–26 is homomultimerization; that stretch reads LIKSLYQSN. Disordered stretches follow at residues 20–46 and 84–116; these read KSLY…RRWR and DSSE…GAKE. A Nuclear localization signal and RNA-binding (RRE) motif is present at residues 34 to 50; the sequence is TRQARRNRRRRWRERQR. The span at 36-46 shows a compositional bias: basic residues; the sequence is QARRNRRRRWR. A Nuclear export signal and binding to XPO1 motif is present at residues 73 to 84; it reads LQLPPLERLTLD. The span at 88–98 shows a compositional bias: polar residues; it reads DCGTSGTQGVG. Phosphoserine; by host occurs at positions 92 and 99.

The protein belongs to the HIV-1 REV protein family. Homomultimer; when bound to the RRE. Multimeric assembly is essential for activity and may involve XPO1. Binds to human KPNB1, XPO1, TNPO1, RANBP5 and IPO7. Interacts with the viral Integrase. Interacts with human KHDRBS1. Interacts with human NAP1; this interaction decreases Rev multimerization and stimulates its activity. Interacts with human DEAD-box helicases DDX3 and DDX24; these interactions may serve for viral RNA export to the cytoplasm and packaging, respectively. Interacts with human PSIP1; this interaction may inhibit HIV-1 DNA integration by promoting dissociation of the Integrase-LEDGF/p75 complex. In terms of processing, asymmetrically arginine dimethylated at one site by host PRMT6. Methylation impairs the RNA-binding activity and export of viral RNA from the nucleus to the cytoplasm. Phosphorylated by protein kinase CK2. Presence of, and maybe binding to the N-terminus of the regulatory beta subunit of CK2 is necessary for CK2-mediated Rev's phosphorylation.

It is found in the host nucleus. It localises to the host nucleolus. The protein localises to the host cytoplasm. Functionally, escorts unspliced or incompletely spliced viral pre-mRNAs (late transcripts) out of the nucleus of infected cells. These pre-mRNAs carry a recognition sequence called Rev responsive element (RRE) located in the env gene, that is not present in fully spliced viral mRNAs (early transcripts). This function is essential since most viral proteins are translated from unspliced or partially spliced pre-mRNAs which cannot exit the nucleus by the pathway used by fully processed cellular mRNAs. Rev itself is translated from a fully spliced mRNA that readily exits the nucleus. Rev's nuclear localization signal (NLS) binds directly to KPNB1/Importin beta-1 without previous binding to KPNA1/Importin alpha-1. KPNB1 binds to the GDP bound form of RAN (Ran-GDP) and targets Rev to the nucleus. In the nucleus, the conversion from Ran-GDP to Ran-GTP dissociates Rev from KPNB1 and allows Rev's binding to the RRE in viral pre-mRNAs. Rev multimerization on the RRE via cooperative assembly exposes its nuclear export signal (NES) to the surface. Rev can then form a complex with XPO1/CRM1 and Ran-GTP, leading to nuclear export of the complex. Conversion from Ran-GTP to Ran-GDP mediates dissociation of the Rev/RRE/XPO1/RAN complex, so that Rev can return to the nucleus for a subsequent round of export. Beside KPNB1, also seems to interact with TNPO1/Transportin-1, RANBP5/IPO5 and IPO7/RANBP7 for nuclear import. The nucleoporin-like HRB/RIP is an essential cofactor that probably indirectly interacts with Rev to release HIV RNAs from the perinuclear region to the cytoplasm. This chain is Protein Rev, found in Human immunodeficiency virus type 1 group M subtype B (isolate RF/HAT3) (HIV-1).